Here is a 77-residue protein sequence, read N- to C-terminus: Putative antitoxin VapB24 (77 aa).

Functionally, possibly the antitoxin component of a type II toxin-antitoxin (TA) system. Its cognate toxin is VapC24 (Potential). The sequence is that of Putative antitoxin VapB24 (vapB24) from Mycobacterium tuberculosis (strain CDC 1551 / Oshkosh).